The primary structure comprises 241 residues: Peroxisomal membrane protein 11C (241 aa).

The Cytoplasmic portion of the chain corresponds to M1 to R124. Residues W125 to L149 form a helical membrane-spanning segment. Residues K150–P211 are Lumenal-facing. Residues W212–Y227 form a helical membrane-spanning segment. Over Q228–P241 the chain is Cytoplasmic.

Belongs to the peroxin-11 family. Homodimer. Heterodimer with either PEX11A or PEX11B. Interacts with FIS1.

It is found in the peroxisome membrane. Its function is as follows. Promotes membrane protrusion and elongation on the peroxisomal surface. The chain is Peroxisomal membrane protein 11C (PEX11G) from Homo sapiens (Human).